The sequence spans 221 residues: GTP cyclohydrolase 1 (221 aa).

The Zn(2+) site is built by C109, H112, and C180.

This sequence belongs to the GTP cyclohydrolase I family. Toroid-shaped homodecamer, composed of two pentamers of five dimers.

It carries out the reaction GTP + H2O = 7,8-dihydroneopterin 3'-triphosphate + formate + H(+). The protein operates within cofactor biosynthesis; 7,8-dihydroneopterin triphosphate biosynthesis; 7,8-dihydroneopterin triphosphate from GTP: step 1/1. This Serratia proteamaculans (strain 568) protein is GTP cyclohydrolase 1.